We begin with the raw amino-acid sequence, 32 residues long: Dermaseptin-L1 (32 aa).

In terms of tissue distribution, expressed by the skin glands.

The protein resides in the secreted. In terms of biological role, antimicrobial peptide active against the Gram-negative bacterium E.coli (MIC=8 uM) but inactive against the Gram-positive bacterium S.aureus. Also inhibits growth of zoospores of the chytrid fungus B.dendrobatidis at high concentrations (above 25 uM). Shows anticancer activities since it is cytolytic against HepG2 human hepatoma-derived cells (LC(50)=45 uM). Is only weakly hemolytic on human erythrocytes. The chain is Dermaseptin-L1 from Agalychnis lemur (Lemur leaf frog).